Reading from the N-terminus, the 282-residue chain is Tryptophan 2,3-dioxygenase (282 aa).

Substrate-binding positions include 51–55 (FIIQH), Y113, and R117. Residue H240 participates in heme binding. Residue T254 coordinates substrate.

Belongs to the tryptophan 2,3-dioxygenase family. In terms of assembly, homotetramer. Requires heme as cofactor.

The enzyme catalyses L-tryptophan + O2 = N-formyl-L-kynurenine. It participates in amino-acid degradation; L-tryptophan degradation via kynurenine pathway; L-kynurenine from L-tryptophan: step 1/2. In terms of biological role, heme-dependent dioxygenase that catalyzes the oxidative cleavage of the L-tryptophan (L-Trp) pyrrole ring and converts L-tryptophan to N-formyl-L-kynurenine. Catalyzes the oxidative cleavage of the indole moiety. The protein is Tryptophan 2,3-dioxygenase of Polaromonas naphthalenivorans (strain CJ2).